Reading from the N-terminus, the 722-residue chain is Dipeptidyl aminopeptidase BII (722 aa).

The N-terminal stretch at 1-24 (MRPNLLAAAIAVPLSLLAAQIAQA) is a signal peptide. Intrachain disulfides connect Cys70-Cys87 and Cys166-Cys174. His86 serves as the catalytic Charge relay system. 215 to 216 (NW) contributes to the substrate binding site. The active-site Charge relay system is Asp224. Substrate-binding positions include Asn330, 655–657 (GNS), and 673–674 (FD). Residue Ser657 is the Charge relay system of the active site.

Belongs to the peptidase S46 family. In terms of assembly, homodimer.

Completely inhibited by the serine protease inhibitor diisopropyl fluorophosphate (DFP) and potently inhibited by 0.5 mM ZnCl(2), 10 mM o-phenanthlorine, phenylmethanesulfonyl fluoride (PMSF) and N-tosyl-L-phenyl-alanyl chloromethyl ketone (TPCK), but not by N-tosyl-L-lysyl chloromethyl ketone (TLCK). Activity is not affected significantly by protease inhibitors, such as chymostatin, leupeptin, N-ethylmaleimide (NEM), iodoacetate (IAA), L-trans-epoxysuccinyl-leucylamido(4-guanido)butane (E64) and pepstatin A or by CoCl(2), CaCl(2) and EDTA. In terms of biological role, exopeptidase that catalyzes the removal of dipeptide units (NH2-P2-P1-) from the free amino termini of oligopeptides and small proteins. Peptide digestion is sequential and substrate recognition is non-specific, with the exception that Pro is not suitable as a P1 residue. Removes many residues of bioactive oligopeptides such as angiotensin I and neuromedin N and also cleaves oxidized insulin B chain. Able to hydrolyze an X-Pro bond, an imido bond. No endopeptidase activity. May play a physiological role in feeding. The protein is Dipeptidyl aminopeptidase BII of Pseudoxanthomonas mexicana.